The chain runs to 304 residues: 17-beta-hydroxysteroid dehydrogenase 13 (304 aa).

Residues 1–19 (MNLILEFLLLVGVIIYSYL) form the signal peptide. Phosphoserine is present on Ser33. 40-67 (LITGAGHGIGRLTAYEFAKQKSRLVLWD) is an NAD(+) binding site. Residue Lys79 is modified to N6-acetyllysine. Ser172 is a binding site for substrate. The active-site Proton acceptor is Tyr185. Position 189 (Lys189) interacts with NAD(+). Residues 276–304 (SSKHPHGGSQQPVTPIPGDLTPSSDFLKH) are disordered.

Belongs to the short-chain dehydrogenases/reductases (SDR) family. Expressed predominantly in the liver (at protein level).

It is found in the lipid droplet. Its subcellular location is the endoplasmic reticulum. The enzyme catalyses 17beta-estradiol + NAD(+) = estrone + NADH + H(+). The catalysed reaction is all-trans-retinol + NAD(+) = all-trans-retinal + NADH + H(+). It carries out the reaction all-trans-retinal + NAD(+) + H2O = all-trans-retinoate + NADH + 2 H(+). Its function is as follows. Plays a pivotal role in hepatic lipid metabolism. In vitro, it catalyzes the oxidation of a variety of lipid substrates, including 17beta-estradiol, retinol, retinal, and leukotriene B4. In Mus musculus (Mouse), this protein is 17-beta-hydroxysteroid dehydrogenase 13 (Hsd17b13).